Consider the following 153-residue polypeptide: Superoxide dismutase [Cu-Zn] (153 aa).

Residues His45, His47, and His62 each contribute to the Cu cation site. Cys56 and Cys145 are disulfide-bonded. Positions 62, 70, 79, and 82 each coordinate Zn(2+). His119 is a Cu cation binding site.

The protein belongs to the Cu-Zn superoxide dismutase family. In terms of assembly, homodimer. Requires Cu cation as cofactor. Zn(2+) serves as cofactor.

The protein localises to the cytoplasm. It carries out the reaction 2 superoxide + 2 H(+) = H2O2 + O2. Functionally, destroys radicals which are normally produced within the cells and which are toxic to biological systems. The sequence is that of Superoxide dismutase [Cu-Zn] from Ceratitis capitata (Mediterranean fruit fly).